The primary structure comprises 101 residues: NADH-quinone oxidoreductase subunit K (101 aa).

3 helical membrane passes run 4–24 (LTHFLVLAAILFAISVLGIFL), 30–50 (IILLMAIELMLLAVNFNFIAF), and 61–81 (IFVFFILTVAAAESAIGLAIL).

The protein belongs to the complex I subunit 4L family. In terms of assembly, NDH-1 is composed of 14 different subunits. Subunits NuoA, H, J, K, L, M, N constitute the membrane sector of the complex.

The protein localises to the cell inner membrane. It carries out the reaction a quinone + NADH + 5 H(+)(in) = a quinol + NAD(+) + 4 H(+)(out). In terms of biological role, NDH-1 shuttles electrons from NADH, via FMN and iron-sulfur (Fe-S) centers, to quinones in the respiratory chain. The immediate electron acceptor for the enzyme in this species is believed to be ubiquinone. Couples the redox reaction to proton translocation (for every two electrons transferred, four hydrogen ions are translocated across the cytoplasmic membrane), and thus conserves the redox energy in a proton gradient. The protein is NADH-quinone oxidoreductase subunit K of Chromobacterium violaceum (strain ATCC 12472 / DSM 30191 / JCM 1249 / CCUG 213 / NBRC 12614 / NCIMB 9131 / NCTC 9757 / MK).